We begin with the raw amino-acid sequence, 739 residues long: Nucleoprotein (739 aa).

Positions 334 to 363 (VNVGEQYQQLREAATEAEKQLQQYAESREL) form a coiled coil. 2 disordered regions span residues 414–475 (RPNL…YHDD) and 493–641 (DDNK…DIGQ). Positions 531 to 546 (SDNNQQSADSEEQGGQ) are enriched in polar residues. Over residues 570 to 579 (TLMDQGDDDP) the composition is skewed to acidic residues. A compositionally biased stretch (basic and acidic residues) spans 614–624 (AEAHEPPHKSS). Over residues 625–634 (NEPAETSQLN) the composition is skewed to polar residues.

It belongs to the filoviruses nucleoprotein family. Homooligomer. Homomultimerizes to form the nucleocapsid. Binds to viral genomic RNA. Interacts with VP35 and VP30 to form the nucleocapsid. Interacts with host PPP2R5C; this interaction leads to VP30 dephosphorylation and viral transcription. Interacts with VP24; this interaction facilitates nucleocapsid assembly and genome packaging. Interacts with matrix protein VP40; this interaction allows recruitment of the nucleocapsid into progeny virions. Interacts with host STAU1. Interacts with host NXF1 (via RNA-binding domain); this interaction recruits NXF1 to the inclusion bodies were viral replication takes place, probably to export viral mRNA-NXF1 complexes from these sites. Interacts with host CCDC92; this interaction sequesters NP in the host cytoplasm. Interacts with host TRIM14. Phosphorylated and O-glycosylated by host. Acetylated by host EP300 in vitro.

Its subcellular location is the virion. The protein resides in the host cytoplasm. Oligomerizes into helical capsid to encapsidate the viral genome, protecting it from nucleases and the cellular innate immune response. VP35 binds to and stabilizes monomeric NP, keeping it soluble. Upon virus replication, NP is recruited to bind cooperatively viral genomic RNA and VP35 is released. The encapsidated genomic RNA is termed the nucleocapsid and serves as template for transcription and replication. The nucleocapsid is helical with a pitch of 10.81 NP per turn and a diameter of about 22nm. Each NP binds to six nucleotides of viral genomic RNA, three being exposed to the solvant and three hidden into the nucleocapsid. Also recruits host PPP2R5C phosphatase to dephosphorylate VP30 and thereby promote viral transcription. Upon virion assembly and budding, NP binds to VP24 and possibly host STAU1. The sequence is that of Nucleoprotein (NP) from Reston ebolavirus (strain Reston-89) (REBOV).